Here is a 525-residue protein sequence, read N- to C-terminus: Eukaryotic translation initiation factor 3 subunit L (525 aa).

Acidic residues predominate over residues 1–19 (MYTQADEYDGGDAGYEDDY). The disordered stretch occupies residues 1 to 21 (MYTQADEYDGGDAGYEDDYSG). The 207-residue stretch at 296–502 (DAIRCFSSVL…IHIADTKVDR (207 aa)) folds into the PCI domain.

This sequence belongs to the eIF-3 subunit L family. Component of the eukaryotic translation initiation factor 3 (eIF-3) complex.

It localises to the cytoplasm. Its function is as follows. Component of the eukaryotic translation initiation factor 3 (eIF-3) complex, which is involved in protein synthesis of a specialized repertoire of mRNAs and, together with other initiation factors, stimulates binding of mRNA and methionyl-tRNAi to the 40S ribosome. The eIF-3 complex specifically targets and initiates translation of a subset of mRNAs involved in cell proliferation. This chain is Eukaryotic translation initiation factor 3 subunit L, found in Nematostella vectensis (Starlet sea anemone).